Consider the following 289-residue polypeptide: ATP phosphoribosyltransferase (289 aa).

It belongs to the ATP phosphoribosyltransferase family. Long subfamily. Mg(2+) is required as a cofactor.

The protein resides in the cytoplasm. The catalysed reaction is 1-(5-phospho-beta-D-ribosyl)-ATP + diphosphate = 5-phospho-alpha-D-ribose 1-diphosphate + ATP. The protein operates within amino-acid biosynthesis; L-histidine biosynthesis; L-histidine from 5-phospho-alpha-D-ribose 1-diphosphate: step 1/9. Feedback inhibited by histidine. Catalyzes the condensation of ATP and 5-phosphoribose 1-diphosphate to form N'-(5'-phosphoribosyl)-ATP (PR-ATP). Has a crucial role in the pathway because the rate of histidine biosynthesis seems to be controlled primarily by regulation of HisG enzymatic activity. The sequence is that of ATP phosphoribosyltransferase from Solibacter usitatus (strain Ellin6076).